Consider the following 45-residue polypeptide: CQNECCGISSLRERNYCANLVCINCFCQGRTYKICRCFFSIHAIR.

As to expression, expressed by the venom gland.

Its subcellular location is the secreted. Its function is as follows. Inhibits potassium channels. The polypeptide is Putative potassium channel blocker (Hottentotta tamulus (Eastern Indian scorpion)).